Reading from the N-terminus, the 347-residue chain is Protease HtpX homolog (347 aa).

4 helical membrane-spanning segments follow: residues 8-28 (VALG…ATIA), 44-64 (AMAL…YLFV), 76-96 (LSFL…TYFA), and 141-163 (AFAY…LALT). Zn(2+) is bound at residue His-174. Glu-175 is an active-site residue. His-178 is a binding site for Zn(2+). 2 helical membrane-spanning segments follow: residues 185-205 (AIML…VTAV) and 221-241 (ILAA…LLVL). Glu-248 provides a ligand contact to Zn(2+).

The protein belongs to the peptidase M48B family. Zn(2+) serves as cofactor.

It is found in the cell membrane. This chain is Protease HtpX homolog, found in Pyrobaculum aerophilum (strain ATCC 51768 / DSM 7523 / JCM 9630 / CIP 104966 / NBRC 100827 / IM2).